The primary structure comprises 319 residues: Ribonucleoside-diphosphate reductase small chain (319 aa).

Positions 70, 101, and 104 each coordinate Fe cation. The active site involves Tyr108. Residues Glu163, Glu197, and His200 each contribute to the Fe cation site. An interaction with R1 region spans residues 313-319 (FSLDVDF).

It belongs to the ribonucleoside diphosphate reductase small chain family. Interacts with RNR1/OPG080 subunit. Can interact with host RNR1 supunit. It depends on Fe cation as a cofactor.

It carries out the reaction a 2'-deoxyribonucleoside 5'-diphosphate + [thioredoxin]-disulfide + H2O = a ribonucleoside 5'-diphosphate + [thioredoxin]-dithiol. In terms of biological role, ribonucleoside-diphosphate reductase holoenzyme provides the precursors necessary for viral DNA synthesis. Allows virus growth in non-dividing cells. Catalyzes the biosynthesis of deoxyribonucleotides from the corresponding ribonucleotides. The sequence is that of Ribonucleoside-diphosphate reductase small chain (OPG048) from Vaccinia virus (strain Ankara) (VACV).